The following is an 806-amino-acid chain: Leucine--tRNA ligase (806 aa).

Positions 38 to 48 match the 'HIGH' region motif; that stretch reads PYPSGEIHMGH. A 'KMSKS' region motif is present at residues 572–576; sequence KMSKS. K575 serves as a coordination point for ATP.

Belongs to the class-I aminoacyl-tRNA synthetase family.

It is found in the cytoplasm. It carries out the reaction tRNA(Leu) + L-leucine + ATP = L-leucyl-tRNA(Leu) + AMP + diphosphate. This Helicobacter pylori (strain ATCC 700392 / 26695) (Campylobacter pylori) protein is Leucine--tRNA ligase.